A 399-amino-acid chain; its full sequence is Vitamin K-dependent protein Z (399 aa).

Positions 1 to 22 (MAGCILLLRGFILTLILHQVEL) are cleaved as a signal peptide. Residues 23 to 40 (SVFLPAPKANNVLRRWRR) constitute a propeptide that is removed on maturation. The Gla domain occupies 41-86 (GSSYFLEEIFQGNLEKECYEEVCNYEEAREVFENDVITDEFWRQYG). 4-carboxyglutamate is present on residues Glu-47, Glu-48, Glu-55, Glu-57, Glu-60, Glu-61, Glu-66, Glu-67, Glu-70, Glu-73, and Glu-80. Cys-58 and Cys-63 are joined by a disulfide. EGF-like domains follow at residues 87 to 123 (GGSPCVSQPCLNNGTCEDHIRSYSCTCSPGYEGKTCA) and 125 to 166 (AKNE…KSCG). Cystine bridges form between Cys-91–Cys-102, Cys-96–Cys-111, Cys-113–Cys-122, Cys-129–Cys-141, Cys-137–Cys-150, Cys-152–Cys-165, and Cys-208–Cys-224. Asn-99 carries an N-linked (GlcNAc...) asparagine glycan. Asp-104 is modified ((3R)-3-hydroxyaspartate). The Peptidase S1 domain maps to 172-399 (ACGALTSEHI…YSMWFKQIMK (228 aa)). N-linked (GlcNAc...) asparagine glycosylation is found at Asn-230, Asn-305, and Asn-331. A disulfide bridge connects residues Cys-326 and Cys-340.

This sequence belongs to the peptidase S1 family. The iron and 2-oxoglutarate dependent 3-hydroxylation of aspartate and asparagine is (R) stereospecific within EGF domains. As to expression, plasma.

It localises to the secreted. Functionally, appears to assist hemostasis by binding thrombin and promoting its association with phospholipid vesicles. Inhibits activity of the coagulation protease factor Xa in the presence of SERPINA10, calcium and phospholipids. This is Vitamin K-dependent protein Z (Proz) from Mus musculus (Mouse).